The following is a 688-amino-acid chain: Transcription factor GTE9 (688 aa).

The interval 1–36 (MTERNGGFPGDYCFEAPGGDYDEGSDSPRVSEGSNC) is disordered. One can recognise a Bromo domain in the interval 132 to 238 (TAVMLLMKQC…KFFEVRWKTL (107 aa)). In terms of domain architecture, NET spans 280 to 361 (ENVVDPAKRV…EHLREIQNKK (82 aa)). Residues 423 to 505 (GNSLGSVSGD…AQNEKQLPPE (83 aa)) form a disordered region. The residue at position 478 (S478) is a Phosphoserine. Over residues 491–500 (QDGNSAQNEK) the composition is skewed to polar residues. Residues 505–688 (EKSYRAAILK…EIDIEEGEID (184 aa)) are transcription activation domain. Residues 534-613 (TRDPEKLQRE…QSVELNENAK (80 aa)) adopt a coiled-coil conformation. The tract at residues 660-688 (FMKQDEDEEEADPLTSPAPEIDIEEGEID) is disordered.

As to quaternary structure, interacts with BT1.

The protein resides in the nucleus. This is Transcription factor GTE9 (GTE9) from Arabidopsis thaliana (Mouse-ear cress).